A 336-amino-acid polypeptide reads, in one-letter code: Zinc-type alcohol dehydrogenase-like protein SE_1777 (336 aa).

This sequence belongs to the zinc-containing alcohol dehydrogenase family. Quinone oxidoreductase subfamily.

This is Zinc-type alcohol dehydrogenase-like protein SE_1777 from Staphylococcus epidermidis (strain ATCC 12228 / FDA PCI 1200).